A 74-amino-acid polypeptide reads, in one-letter code: Putative defensin-like protein 186 (74 aa).

Residues 1–22 (MKNSSIILVLVFFFFISSSGEA) form the signal peptide. Intrachain disulfides connect Cys25-Cys74, Cys31-Cys51, Cys37-Cys68, and Cys41-Cys70.

This sequence belongs to the DEFL family.

Its subcellular location is the secreted. In Arabidopsis thaliana (Mouse-ear cress), this protein is Putative defensin-like protein 186 (LCR40).